The following is a 326-amino-acid chain: Zinc finger protein 830 (326 aa).

Over residues 1 to 11 (MAASRKGKAVK) the composition is skewed to basic residues. A disordered region spans residues 1 to 37 (MAASRKGKAVKAVKQEDLRRLMQETRRDSGRQKRVES). The segment covering 13–36 (VKQEDLRRLMQETRRDSGRQKRVE) has biased composition (basic and acidic residues). Residues 50-72 (CALCDAPVKNALLWQTHVLGKQH) form a C2H2-type zinc finger. Over residues 83–108 (TAPAHTPAPAHTPAHTPAAASSSSST) the composition is skewed to low complexity. 3 disordered regions span residues 83–214 (TAPA…PVRD), 237–257 (EMRQ…EEGR), and 276–309 (EELR…EEEE). Residues 180–195 (HSGSVSKAEQQESQEP) are compositionally biased toward polar residues. Residues 224–295 (KDQLEREWEE…RSRRRSQRRE (72 aa)) are a coiled coil. A compositionally biased stretch (basic and acidic residues) spans 276 to 286 (EELRAKQETAR). Acidic residues predominate over residues 298–309 (PMQEEEPLEEEE).

The protein localises to the nucleus. It localises to the chromosome. The protein resides in the nucleus speckle. Its function is as follows. May act as an important regulator of the cell cycle that participates in the maintenance of genome integrity. This Danio rerio (Zebrafish) protein is Zinc finger protein 830.